The chain runs to 229 residues: Trypsin (229 aa).

Residues 1-7 constitute a propeptide, activation peptide; the sequence is APDDDDK. The Peptidase S1 domain maps to 8 to 227; that stretch reads IVGGYECPKH…YVSWIHETIA (220 aa). 6 disulfides stabilise this stretch: Cys14/Cys143, Cys32/Cys48, Cys116/Cys216, Cys123/Cys189, Cys154/Cys168, and Cys179/Cys203. His47 serves as the catalytic Charge relay system. Ca(2+) contacts are provided by Glu59 and Glu69. Asp91 (charge relay system) is an active-site residue. Ser183 functions as the Charge relay system in the catalytic mechanism.

Belongs to the peptidase S1 family. It depends on Ca(2+) as a cofactor.

Its subcellular location is the secreted. The protein localises to the extracellular space. It carries out the reaction Preferential cleavage: Arg-|-Xaa, Lys-|-Xaa.. The sequence is that of Trypsin from Squalus acanthias (Spiny dogfish).